The chain runs to 312 residues: Malate dehydrogenase (312 aa).

Residues 7–13 and aspartate 34 contribute to the NAD(+) site; that span reads GAAGGIG. Residues arginine 81 and arginine 87 each contribute to the substrate site. Residues asparagine 94 and 117 to 119 each bind NAD(+); that span reads ITN. Substrate-binding residues include asparagine 119 and arginine 153. Residue histidine 177 is the Proton acceptor of the active site. Methionine 227 contacts NAD(+).

The protein belongs to the LDH/MDH superfamily. MDH type 1 family. As to quaternary structure, homodimer.

The catalysed reaction is (S)-malate + NAD(+) = oxaloacetate + NADH + H(+). In terms of biological role, catalyzes the reversible oxidation of malate to oxaloacetate. The polypeptide is Malate dehydrogenase (Salmonella newport (strain SL254)).